The following is a 283-amino-acid chain: Glutamate racemase (283 aa).

Substrate is bound by residues 28 to 29 and 60 to 61; these read DS and YG. The Proton donor/acceptor role is filled by cysteine 92. A substrate-binding site is contributed by 93–94; sequence NT. Residue cysteine 204 is the Proton donor/acceptor of the active site. 205–206 provides a ligand contact to substrate; it reads TH.

The protein belongs to the aspartate/glutamate racemases family.

It catalyses the reaction L-glutamate = D-glutamate. Its pathway is cell wall biogenesis; peptidoglycan biosynthesis. In terms of biological role, provides the (R)-glutamate required for cell wall biosynthesis. The protein is Glutamate racemase of Salmonella choleraesuis (strain SC-B67).